The primary structure comprises 654 residues: Endoplasmic reticulum chaperone BiP (654 aa).

The N-terminal stretch at 1-18 is a signal peptide; it reads MKFPMVAAALLLLCAVRA. The tract at residues 1-80 is required for interaction with ELAPOR1; the sequence is MKFPMVAAAL…EGERLIGDAA (80 aa). 36–39 is a binding site for ATP; that stretch reads GTTY. Serine 86 is modified (phosphoserine). Residue lysine 96 coordinates ATP. Lysine 125 carries the N6-acetyllysine modification. A nucleotide-binding (NBD) region spans residues 125–280; the sequence is KPYIQVDIGG…KKKTGKDVRK (156 aa). Tyrosine 160 carries the post-translational modification 3'-nitrotyrosine. An N6-acetyllysine modification is found at lysine 213. Residue 227–229 coordinates ATP; that stretch reads GGT. Lysine 271 carries the post-translational modification N6-acetyllysine. 293–300 contacts ATP; it reads EKAKRALS. Lysine 326 carries the N6-acetyllysine modification. A Glycyl lysine isopeptide (Lys-Gly) (interchain with G-Cter in SUMO2) cross-link involves residue lysine 352. Lysine 353 carries the N6-acetyllysine; alternate modification. Residue lysine 353 forms a Glycyl lysine isopeptide (Lys-Gly) (interchain with G-Cter in SUMO1); alternate linkage. 364-367 provides a ligand contact to ATP; sequence GSTR. Residues 409 to 419 form an interdomain linker region; the sequence is QDTGDLVLLDV. Positions 420–500 are substrate-binding (SBD); that stretch reads CPLTLGIETV…PRGVPQIEVT (81 aa). Residue lysine 447 is modified to N6-succinyllysine. Position 492 is an omega-N-methylarginine (arginine 492). Residue threonine 518 is modified to O-AMP-threonine; alternate. The residue at position 518 (threonine 518) is a Phosphothreonine; alternate. Position 585 is an N6,N6,N6-trimethyllysine; by METTL21A; in vitro (lysine 585). Lysine 585 carries the post-translational modification N6,N6-dimethyllysine; alternate. An N6-methyllysine; alternate modification is found at lysine 585. The residue at position 591 (lysine 591) is an N6-methyllysine. The segment at 632 to 654 is disordered; sequence SKLYGSAGPPPTGEEDTSEKDEL. Phosphothreonine is present on residues threonine 643 and threonine 648. Residues 644–654 are compositionally biased toward acidic residues; the sequence is GEEDTSEKDEL. Serine 649 carries the post-translational modification Phosphoserine. A Prevents secretion from ER motif is present at residues 651–654; the sequence is KDEL.

The protein belongs to the heat shock protein 70 family. As to quaternary structure, monomer and homooligomer; homooligomerization via the interdomain linker inactivates the chaperone activity and acts as a storage of HSPA5/BiP molecules. Interacts with DNAJC1 (via J domain). Component of an EIF2 complex at least composed of CELF1/CUGBP1, CALR, CALR3, EIF2S1, EIF2S2, HSP90B1 and HSPA5. Part of a large chaperone multiprotein complex comprising DNAJB11, HSP90B1, HSPA5, HYOU, PDIA2, PDIA4, PDIA6, PPIB, SDF2L1, UGGT1 and very small amounts of ERP29, but not, or at very low levels, CALR nor CANX. Interacts with TMEM132A and TRIM21. May form a complex with ERLEC1, OS9, SEL1L and SYVN1. Interacts with DNAJC10. Interacts with DNAJB9/ERdj4; leading to recruit HSPA5/BiP to ERN1/IRE1. Interacts with ERN1/IRE1 (via luminal domain); the interaction takes place following interaction with DNAJB9/ERdj4 and leads to inactivate ERN1/IRE1, the interaction also competitively inhibits ERN1 interaction with MANF. Interacts directly with MANF (via SAP domain); the interaction inhibits ATP binding to HSPA5/BiP and subsequent nucleotide exchange. Interacts with EIF2AK3/PERK (via luminal domain); interaction leads to inactivate EIF2AK3/PERK. Interacts with MX1. Interacts with METTL23. Interacts with CEMIP; the interaction induces calcium leakage from the endoplasmic reticulum and cell migration. Interacts with PCSK4 form; the interaction takes place in the endoplasmic reticulum. Interacts with CIPC. Interacts with CCDC88B (via C-terminus); the interaction opposes ERN1-mediated JNK activation, protecting against apoptosis. Interacts with INPP5K; necessary for INPP5K localization at the endoplasmic reticulum. Interacts with LOXL2; leading to activate the ERN1/IRE1-XBP1 pathway of the unfolded protein response. Interacts with CLU under stressed condition; interaction increases CLU protein stability; facilitates its retrotranslocation and redistribution to the mitochondria; cooperatively suppress stress-induced apoptosis by stabilizing mitochondrial membrane integrity. Interacts with CCDC47. Interacts with CLN3. Interacts with ELAPOR1; may regulate the function of HSPA5 in apoptosis and cell proliferation. Interacts with CASP7. Interacts with ILDR2; the interaction stabilizes ILDR2 expression. Interacts with ADAM7. In unstressed cells, AMPylation at Thr-518 by FICD inactivates the chaperome activity: AMPylated form is locked in a relatively inert state and only weakly stimulated by J domain-containing proteins. In response to endoplasmic reticulum stress, de-AMPylation by the same protein, FICD, restores the chaperone activity.

The protein resides in the endoplasmic reticulum lumen. It localises to the melanosome. Its subcellular location is the cytoplasm. It is found in the cell surface. It catalyses the reaction ATP + H2O = ADP + phosphate + H(+). The chaperone activity is regulated by ATP-induced allosteric coupling of the nucleotide-binding (NBD) and substrate-binding (SBD) domains. In the ADP-bound and nucleotide-free (apo) states, the two domains have little interaction. In contrast, in the ATP-bound state the two domains are tightly coupled, which results in drastically accelerated kinetics in both binding and release of polypeptide substrates. J domain-containing co-chaperones (DNAJB9/ERdj4 or DNAJC10/ERdj5) stimulate the ATPase activity and are required for efficient substrate recognition by HSPA5/BiP. Homooligomerization inactivates participating HSPA5/BiP protomers and probably act as reservoirs to store HSPA5/BiP molecules when they are not needed by the cell. In terms of biological role, endoplasmic reticulum chaperone that plays a key role in protein folding and quality control in the endoplasmic reticulum lumen. Involved in the correct folding of proteins and degradation of misfolded proteins via its interaction with DNAJC10/ERdj5, probably to facilitate the release of DNAJC10/ERdj5 from its substrate. Acts as a key repressor of the EIF2AK3/PERK and ERN1/IRE1-mediated unfolded protein response (UPR). In the unstressed endoplasmic reticulum, recruited by DNAJB9/ERdj4 to the luminal region of ERN1/IRE1, leading to disrupt the dimerization of ERN1/IRE1, thereby inactivating ERN1/IRE1. Also binds and inactivates EIF2AK3/PERK in unstressed cells. Accumulation of misfolded protein in the endoplasmic reticulum causes release of HSPA5/BiP from ERN1/IRE1 and EIF2AK3/PERK, allowing their homodimerization and subsequent activation. Plays an auxiliary role in post-translational transport of small presecretory proteins across endoplasmic reticulum (ER). May function as an allosteric modulator for SEC61 channel-forming translocon complex, likely cooperating with SEC62 to enable the productive insertion of these precursors into SEC61 channel. Appears to specifically regulate translocation of precursors having inhibitory residues in their mature region that weaken channel gating. May also play a role in apoptosis and cell proliferation. The protein is Endoplasmic reticulum chaperone BiP of Cricetulus griseus (Chinese hamster).